The primary structure comprises 417 residues: NADH-quinone oxidoreductase subunit D (417 aa).

It belongs to the complex I 49 kDa subunit family. In terms of assembly, NDH-1 is composed of 14 different subunits. Subunits NuoB, C, D, E, F, and G constitute the peripheral sector of the complex.

It is found in the cell inner membrane. It carries out the reaction a quinone + NADH + 5 H(+)(in) = a quinol + NAD(+) + 4 H(+)(out). In terms of biological role, NDH-1 shuttles electrons from NADH, via FMN and iron-sulfur (Fe-S) centers, to quinones in the respiratory chain. The immediate electron acceptor for the enzyme in this species is believed to be ubiquinone. Couples the redox reaction to proton translocation (for every two electrons transferred, four hydrogen ions are translocated across the cytoplasmic membrane), and thus conserves the redox energy in a proton gradient. The sequence is that of NADH-quinone oxidoreductase subunit D from Herminiimonas arsenicoxydans.